A 274-amino-acid chain; its full sequence is Coiled-coil domain-containing protein 28A (274 aa).

Positions 121-166 are disordered; it reads VSKSTGFSNPASQSTSQRPKLKRVMKEKTKPQGGEGKGAQSTPIQH. Positions 122 to 138 are enriched in polar residues; it reads SKSTGFSNPASQSTSQR. The stretch at 234–263 forms a coiled coil; that stretch reads KRKTASDSNLDRLLSDLEELNSSIQKLHLA.

This is Coiled-coil domain-containing protein 28A (CCDC28A) from Homo sapiens (Human).